An 844-amino-acid chain; its full sequence is Fe(2+) transport protein A/Fe(2+) transporter FeoB fusion protein (844 aa).

Residues 1 to 73 (MRLSELHTGD…EDAAKIEVEL (73 aa)) form a feoA region. The segment at 74-844 (ISSNATSSPA…LIYRIGILFF (771 aa)) is feoB. A compositionally biased stretch (polar residues) spans 79-106 (TSSPASNDIGEQSANPDSNESIPTNPTE). The disordered stretch occupies residues 79–110 (TSSPASNDIGEQSANPDSNESIPTNPTEDISA). The FeoB-type G domain maps to 126–289 (VIRVALIGNP…FDTLISIHEG (164 aa)). GTP is bound by residues 133-140 (GNPNCGKT), 158-162 (GVTVE), 179-182 (DLPG), 240-243 (NMFD), and 269-271 (VGR). A run of 8 helical transmembrane segments spans residues 418–438 (VLGFPLFLLFMFIMFEATFVL), 475–495 (IGGVGGVIVFLPNILILYFFI), 520–540 (LHGKSFIPLIMGFGCNVPAIM), 559–579 (PLMSCSARLPVYLLLAGAFFP), 581–601 (SAGLVLFGLYFLGILLAVLLA), 646–666 (MGSIILLASIVIWFLSYYPRY), 786–806 (IIALALMAFVLIYFPCIATVV), and 817–837 (WAVFSIIYSCSLAWIVSFLIY).

It in the N-terminal section; belongs to the FeoA family. The protein in the C-terminal section; belongs to the TRAFAC class TrmE-Era-EngA-EngB-Septin-like GTPase superfamily. FeoB GTPase (TC 9.A.8) family.

The protein resides in the cell inner membrane. In terms of biological role, probable transporter of a GTP-driven Fe(2+) uptake system. In Porphyromonas gingivalis (strain ATCC BAA-308 / W83), this protein is Fe(2+) transport protein A/Fe(2+) transporter FeoB fusion protein.